A 693-amino-acid chain; its full sequence is Elongation factor G (693 aa).

One can recognise a tr-type G domain in the interval 8-283; sequence NRIRNIGIAA…AVIDYLPAPT (276 aa). Residues 17–24, 81–85, and 135–138 contribute to the GTP site; these read AHIDAGKT, DTPGH, and NKMD.

It belongs to the TRAFAC class translation factor GTPase superfamily. Classic translation factor GTPase family. EF-G/EF-2 subfamily.

It is found in the cytoplasm. Functionally, catalyzes the GTP-dependent ribosomal translocation step during translation elongation. During this step, the ribosome changes from the pre-translocational (PRE) to the post-translocational (POST) state as the newly formed A-site-bound peptidyl-tRNA and P-site-bound deacylated tRNA move to the P and E sites, respectively. Catalyzes the coordinated movement of the two tRNA molecules, the mRNA and conformational changes in the ribosome. This chain is Elongation factor G, found in Wolinella succinogenes (strain ATCC 29543 / DSM 1740 / CCUG 13145 / JCM 31913 / LMG 7466 / NCTC 11488 / FDC 602W) (Vibrio succinogenes).